The chain runs to 113 residues: Signal peptidase complex subunit 1 (113 aa).

The Cytoplasmic portion of the chain corresponds to 1–32 (MDGMIAMLPAPLQQLSSHIDFQGQKVAERTYQ). The helical transmembrane segment at 33–53 (VILTLAGIIGFFVGYSTQQLS) threads the bilayer. The Lumenal portion of the chain corresponds to 54-57 (YAMY). A helical transmembrane segment spans residues 58-78 (TVMGAAVFTALIILPPWPFLF). Residues 79–113 (RKNPIVWQTPIEEQEASSSSDNEKKDKKKETKKTK) lie on the Cytoplasmic side of the membrane. Residues 89-113 (IEEQEASSSSDNEKKDKKKETKKTK) form a disordered region.

Belongs to the SPCS1 family. Component of the signal peptidase complex (SPC) composed of a catalytic subunit sec-11 and three accessory subunits spcs-1, spcs-2 and spcs-3. The complex induces a local thinning of the ER membrane which is used to measure the length of the signal peptide (SP) h-region of protein substrates. This ensures the selectivity of the complex towards h-regions shorter than 18-20 amino acids.

The protein resides in the endoplasmic reticulum membrane. Component of the signal peptidase complex (SPC) which catalyzes the cleavage of N-terminal signal sequences from nascent proteins as they are translocated into the lumen of the endoplasmic reticulum. Dispensable for SPC enzymatic activity. The polypeptide is Signal peptidase complex subunit 1 (Caenorhabditis briggsae).